The primary structure comprises 181 residues: Acireductone dioxygenase (181 aa).

Residues H97, H99, E103, and H141 each contribute to the Fe(2+) site. Ni(2+) contacts are provided by H97, H99, E103, and H141.

This sequence belongs to the acireductone dioxygenase (ARD) family. As to quaternary structure, monomer. It depends on Fe(2+) as a cofactor. Ni(2+) is required as a cofactor.

The catalysed reaction is 1,2-dihydroxy-5-(methylsulfanyl)pent-1-en-3-one + O2 = 3-(methylsulfanyl)propanoate + CO + formate + 2 H(+). It catalyses the reaction 1,2-dihydroxy-5-(methylsulfanyl)pent-1-en-3-one + O2 = 4-methylsulfanyl-2-oxobutanoate + formate + 2 H(+). It functions in the pathway amino-acid biosynthesis; L-methionine biosynthesis via salvage pathway; L-methionine from S-methyl-5-thio-alpha-D-ribose 1-phosphate: step 5/6. In terms of biological role, catalyzes 2 different reactions between oxygen and the acireductone 1,2-dihydroxy-3-keto-5-methylthiopentene (DHK-MTPene) depending upon the metal bound in the active site. Fe-containing acireductone dioxygenase (Fe-ARD) produces formate and 2-keto-4-methylthiobutyrate (KMTB), the alpha-ketoacid precursor of methionine in the methionine recycle pathway. Ni-containing acireductone dioxygenase (Ni-ARD) produces methylthiopropionate, carbon monoxide and formate, and does not lie on the methionine recycle pathway. This chain is Acireductone dioxygenase, found in Pseudomonas fluorescens (strain Pf0-1).